The primary structure comprises 514 residues: Sugar transport protein 3 (514 aa).

Residues 1-19 (MVAEEARKEAMAKSVSGGK) are Cytoplasmic-facing. Transmembrane regions (helical) follow at residues 20–40 (ITYFVVASCVMAAMGGVIFGY), 87–107 (LLTSFTSSLYVSGLIATLLAS), 124–144 (VSFLAGAALGGSAQNVAMLII), 147–167 (LLLGVGVGFANQSVPLYLSEM), 174–194 (GAISNGFQLCIGIGFLSANVI), 207–227 (ISLATAAIPASILTLGSLFLP), 289–309 (LVMALVIPFFQQVTGINVVAF), 327–347 (MSTLVTGIVGTSSTLLSMLVV), 356–376 (FLIGGLQMLVSQVTIGVIVMV), 392–412 (VVVLVCVYVAGFGWSWGPLGW), 430–450 (VTVAVSFVFTFAVAQSAPPML), and 456–476 (GIFFFYGGWLVVMTVAVQLFL). Residues 477-514 (PETKNVPIEKVVGLWEKHWFWRRMTSKRDIQETTILSH) lie on the Cytoplasmic side of the membrane.

Belongs to the major facilitator superfamily. Sugar transporter (TC 2.A.1.1) family.

It localises to the membrane. In terms of biological role, mediates an active uptake of hexoses, probably by sugar/hydrogen symport. The protein is Sugar transport protein 3 (STP3) of Arabidopsis thaliana (Mouse-ear cress).